We begin with the raw amino-acid sequence, 207 residues long: MANVKLFDQTGKEVSSVELNEAIFGIEPNESVVFDVVISQRASLRQGTHAVKNRSAVSGGGRKPWRQKGTGRARQGSIRSPQWRGGGVVFGPTPRSYGYKLPQKVRRLALKSVYSAKVAEDKFVAVENLSFAAPKTAEFASVLSALSIDSKVLVILEEGNEFAALSARNLPNVTVATATTASVLDIVNADKLLVTKEAISTIEGVLA.

Residues 49-78 (HAVKNRSAVSGGGRKPWRQKGTGRARQGSI) are disordered.

Belongs to the universal ribosomal protein uL4 family. In terms of assembly, part of the 50S ribosomal subunit.

In terms of biological role, one of the primary rRNA binding proteins, this protein initially binds near the 5'-end of the 23S rRNA. It is important during the early stages of 50S assembly. It makes multiple contacts with different domains of the 23S rRNA in the assembled 50S subunit and ribosome. Its function is as follows. Forms part of the polypeptide exit tunnel. The polypeptide is Large ribosomal subunit protein uL4 (Streptococcus agalactiae serotype Ia (strain ATCC 27591 / A909 / CDC SS700)).